We begin with the raw amino-acid sequence, 534 residues long: Zinc finger protein 703-A (534 aa).

Disordered regions lie at residues 1–35 (MNCS…THPV), 90–251 (SQIG…VAPV), and 300–320 (QLPG…LTGA). 3 stretches are compositionally biased toward low complexity: residues 15–34 (QSSS…PTHP), 115–124 (RSSSLKLGES), and 146–155 (GSSAGGSADK). Positions 173–182 (SPSSRVSSPG) are enriched in polar residues. Basic and acidic residues predominate over residues 185–200 (CDSKNNESQEKKEPEA). A compositionally biased stretch (polar residues) spans 204–217 (SLETSQANPTLTRA). The segment covering 218 to 229 (SISNSSAESSQS) has biased composition (low complexity). A compositionally biased stretch (polar residues) spans 230–239 (GDVTPSSKSD). The segment at 406–434 (HICNWVSASGPCDKRFATSEELLAHLRTH) adopts a C2H2-type zinc-finger fold.

The protein belongs to the Elbow/Noc family.

It is found in the nucleus. It localises to the cytoplasm. Transcriptional corepressor which does not bind directly to DNA and may regulate transcription through recruitment of histone deacetylases to gene promoters. Regulates cell adhesion, migration and proliferation. Involved in specification of the lateral neural plate border (NPB). May be required for segmental gene expression during hindbrain development. The sequence is that of Zinc finger protein 703-A (znf703-a) from Xenopus laevis (African clawed frog).